The primary structure comprises 59 residues: Large ribosomal subunit protein uL30 (59 aa).

It belongs to the universal ribosomal protein uL30 family. Part of the 50S ribosomal subunit.

The chain is Large ribosomal subunit protein uL30 from Psychrobacter cryohalolentis (strain ATCC BAA-1226 / DSM 17306 / VKM B-2378 / K5).